A 283-amino-acid polypeptide reads, in one-letter code: 2-hydroxymuconate semialdehyde hydrolase (283 aa).

Positions 32 to 262 constitute an AB hydrolase-1 domain; sequence LMMIHGSGPG…QCGHWTQIEH (231 aa). Active-site residues include S107, D228, and H256.

This sequence belongs to the DmpD/TodF/XylF esterase family.

It catalyses the reaction (2Z,4E)-2-hydroxy-6-oxohexa-2,4-dienoate + H2O = 2-oxopent-4-enoate + formate + H(+). The protein operates within aromatic compound metabolism; benzoate degradation via hydroxylation. Its function is as follows. Catalyzes the conversion of 2-hydroxymuconate semialdehyde to 2-hydroxypent-2,4-dienoate. The protein is 2-hydroxymuconate semialdehyde hydrolase (dmpD) of Pseudomonas sp. (strain CF600).